The following is a 674-amino-acid chain: Tripartite terminase subunit 3 (674 aa).

The Walker A motif signature appears at V212–T219. A Walker B motif motif is present at residues L305–E310. E310 acts as the For ATPase activity in catalysis. Residues D463, E534, and D651 each act as for nuclease activity in the active site.

The protein belongs to the herpesviridae TRM3 protein family. As to quaternary structure, interacts with the terminase subunits TRM1 and TRM2. Interacts with portal protein.

The protein localises to the host nucleus. Functionally, component of the molecular motor that translocates viral genomic DNA in empty capsid during DNA packaging. Forms a tripartite terminase complex together with TRM1 and TRM2 in the host cytoplasm. Once the complex reaches the host nucleus, it interacts with the capsid portal vertex. This portal forms a ring in which genomic DNA is translocated into the capsid. TRM3 carries an RNase H-like nuclease activity that plays an important role for the cleavage of concatemeric viral DNA into unit length genomes. This chain is Tripartite terminase subunit 3, found in Homo sapiens (Human).